The primary structure comprises 323 residues: Acetyl-coenzyme A carboxylase carboxyl transferase subunit alpha (323 aa).

One can recognise a CoA carboxyltransferase C-terminal domain in the interval E36 to I293.

It belongs to the AccA family. In terms of assembly, acetyl-CoA carboxylase is a heterohexamer composed of biotin carboxyl carrier protein (AccB), biotin carboxylase (AccC) and two subunits each of ACCase subunit alpha (AccA) and ACCase subunit beta (AccD).

The protein resides in the cytoplasm. It carries out the reaction N(6)-carboxybiotinyl-L-lysyl-[protein] + acetyl-CoA = N(6)-biotinyl-L-lysyl-[protein] + malonyl-CoA. Its pathway is lipid metabolism; malonyl-CoA biosynthesis; malonyl-CoA from acetyl-CoA: step 1/1. Its function is as follows. Component of the acetyl coenzyme A carboxylase (ACC) complex. First, biotin carboxylase catalyzes the carboxylation of biotin on its carrier protein (BCCP) and then the CO(2) group is transferred by the carboxyltransferase to acetyl-CoA to form malonyl-CoA. The sequence is that of Acetyl-coenzyme A carboxylase carboxyl transferase subunit alpha from Carboxydothermus hydrogenoformans (strain ATCC BAA-161 / DSM 6008 / Z-2901).